Consider the following 598-residue polypeptide: Urease subunit alpha (598 aa).

Positions glycine 136 to phenylalanine 598 constitute a Urease domain. Residues histidine 141, histidine 143, and lysine 223 each contribute to the Ni(2+) site. Lysine 223 bears the N6-carboxylysine mark. Histidine 225 is a substrate binding site. Ni(2+)-binding residues include histidine 252 and histidine 278. Histidine 326 serves as the catalytic Proton donor. Aspartate 366 is a Ni(2+) binding site.

Belongs to the metallo-dependent hydrolases superfamily. Urease alpha subunit family. In terms of assembly, heterotrimer of UreA (gamma), UreB (beta) and UreC (alpha) subunits. Three heterotrimers associate to form the active enzyme. It depends on Ni cation as a cofactor. Post-translationally, carboxylation allows a single lysine to coordinate two nickel ions.

The protein localises to the cytoplasm. The catalysed reaction is urea + 2 H2O + H(+) = hydrogencarbonate + 2 NH4(+). Its pathway is nitrogen metabolism; urea degradation; CO(2) and NH(3) from urea (urease route): step 1/1. The chain is Urease subunit alpha from Ureaplasma urealyticum serovar 10 (strain ATCC 33699 / Western).